A 254-amino-acid polypeptide reads, in one-letter code: uncharacterized protein (254 aa).

The stretch at 66–111 forms a coiled coil; it reads DMVSEMNKRMDDLAARIVVLEDEKAELRRINQRLTEKVRDKDMEKA.

This is an uncharacterized protein from Ostreid herpesvirus 1 (isolate France) (OsHV-1).